Reading from the N-terminus, the 263-residue chain is Endonuclease 8 (263 aa).

The active-site Schiff-base intermediate with DNA is Pro-2. Glu-3 functions as the Proton donor in the catalytic mechanism. The active-site Proton donor; for beta-elimination activity is Lys-53. DNA-binding residues include Gln-70, Arg-125, and Asn-169. The FPG-type zinc finger occupies 229 to 263 (KVFHRDGEACERCGGIIEKTTLSSRPFYWCPHCQK). Residue Arg-253 is the Proton donor; for delta-elimination activity of the active site.

Belongs to the FPG family. It depends on Zn(2+) as a cofactor.

The enzyme catalyses 2'-deoxyribonucleotide-(2'-deoxyribose 5'-phosphate)-2'-deoxyribonucleotide-DNA = a 3'-end 2'-deoxyribonucleotide-(2,3-dehydro-2,3-deoxyribose 5'-phosphate)-DNA + a 5'-end 5'-phospho-2'-deoxyribonucleoside-DNA + H(+). Its function is as follows. Involved in base excision repair of DNA damaged by oxidation or by mutagenic agents. Acts as a DNA glycosylase that recognizes and removes damaged bases. Has a preference for oxidized pyrimidines, such as thymine glycol, 5,6-dihydrouracil and 5,6-dihydrothymine. Has AP (apurinic/apyrimidinic) lyase activity and introduces nicks in the DNA strand. Cleaves the DNA backbone by beta-delta elimination to generate a single-strand break at the site of the removed base with both 3'- and 5'-phosphates. The polypeptide is Endonuclease 8 (Salmonella paratyphi B (strain ATCC BAA-1250 / SPB7)).